A 419-amino-acid polypeptide reads, in one-letter code: Dual specificity mitogen-activated protein kinase kinase 7 (419 aa).

Alanine 2 is modified (N-acetylalanine). The stretch at 2-30 (AASSLEQKLSRLEAKLKQENREARRRIDL) forms a coiled coil. Over residues 18 to 30 (KQENREARRRIDL) the composition is skewed to basic and acidic residues. The interval 18-77 (KQENREARRRIDLNLDISPQRPRPTLQLPLANDGGSRSPSSESSPQHPTPPSRPRHMLGL) is disordered. Low complexity predominate over residues 36–63 (PQRPRPTLQLPLANDGGSRSPSSESSPQ). The d Domain stretch occupies residues 37-57 (QRPRPTLQLPLANDGGSRSPS). The 261-residue stretch at 120–380 (LENLGEMGSG…YNKLLEHSFI (261 aa)) folds into the Protein kinase domain. ATP-binding positions include 126–134 (MGSGTCGQV) and lysine 149. Aspartate 243 (proton acceptor) is an active-site residue. Serine 271 bears the Phosphoserine; by MAP3K mark. Threonine 275 is modified (phosphothreonine; by MAP3K). Residues 377 to 400 (HSFIKHYETLEVDVASWFKDVMAK) are DVD domain. At serine 411 the chain carries Phosphoserine.

The protein belongs to the protein kinase superfamily. STE Ser/Thr protein kinase family. MAP kinase kinase subfamily. Interacts with VRK2. Interacts (via its D domain) with its substrates MAPK8/JNK1, MAPK9/JNK2 and MAPK10/JNK3. Interacts (via its DVD domain) with MAP3Ks activators like MAP3K5/ASK1 and MAP3K1/MEKK1. Interacts with MAPK8IP1/JIP1, MAPK8IP2/JIP2 and MAPK8IP3/JIP3 scaffold proteins. Interacts with RASSF7, the interaction promotes phosphorylation. Found in a complex with SH3RF1, RAC1, MAP3K11/MLK3, MAPK8IP1/JIP1 and MAPK8/JNK1. Found in a complex with SH3RF1, RAC2, MAP3K7/TAK1, MAPK8IP1/JIP1, MAPK8/JNK1 and MAPK9/JNK2. Requires Mg(2+) as cofactor. Activated by phosphorylation on Ser-271 and Thr-275 by MAP kinase kinase kinases (MAP3Ks).

The protein resides in the nucleus. Its subcellular location is the cytoplasm. The enzyme catalyses L-seryl-[protein] + ATP = O-phospho-L-seryl-[protein] + ADP + H(+). It catalyses the reaction L-threonyl-[protein] + ATP = O-phospho-L-threonyl-[protein] + ADP + H(+). The catalysed reaction is L-tyrosyl-[protein] + ATP = O-phospho-L-tyrosyl-[protein] + ADP + H(+). With respect to regulation, activated by phosphorylation by specific MAP kinase kinase kinases such as MAP3K1/MEKK1, MAP3K3/MEKK3, MAP3K11/MLK3 and MAP3K12/DLK. Its function is as follows. Dual specificity protein kinase which acts as an essential component of the MAP kinase signal transduction pathway. Essential component of the stress-activated protein kinase/c-Jun N-terminal kinase (SAP/JNK) signaling pathway. With MAP2K4/MKK4, is the one of the only known kinase to directly activate the stress-activated protein kinase/c-Jun N-terminal kinases MAPK8/JNK1, MAPK9/JNK2 and MAPK10/JNK3. MAP2K4/MKK4 and MAP2K7/MKK7 both activate the JNKs by phosphorylation, but they differ in their preference for the phosphorylation site in the Thr-Pro-Tyr motif. MAP2K4/MKK4 shows preference for phosphorylation of the Tyr residue and MAP2K7/MKK7 for the Thr residue. The monophosphorylation of JNKs on the Thr residue is sufficient to increase JNK activity indicating that MAP2K7/MKK7 is important to trigger JNK activity, while the additional phosphorylation of the Tyr residue by MAP2K4/MKK4 ensures optimal JNK activation. Has a specific role in JNK signal transduction pathway activated by pro-inflammatory cytokines. The MKK/JNK signaling pathway is also involved in mitochondrial death signaling pathway, including the release cytochrome c, leading to apoptosis. Part of a non-canonical MAPK signaling pathway, composed of the upstream MAP3K12 kinase and downstream MAP kinases MAPK1/ERK2 and MAPK3/ERK1, that enhances the AP-1-mediated transcription of APP in response to APOE. The polypeptide is Dual specificity mitogen-activated protein kinase kinase 7 (Rattus norvegicus (Rat)).